A 135-amino-acid chain; its full sequence is Interleukin-4 (135 aa).

The signal sequence occupies residues 1 to 24; sequence MGLTSQLIPALVCLLVCTSHFVHG. Intrachain disulfides connect Cys-27/Cys-135, Cys-48/Cys-85, and Cys-70/Cys-105. 2 N-linked (GlcNAc...) asparagine glycosylation sites follow: Asn-62 and Asn-96.

The protein belongs to the IL-4/IL-13 family.

Its subcellular location is the secreted. In terms of biological role, participates in at least several B-cell activation processes as well as of other cell types. It is a costimulator of DNA-synthesis. It induces the expression of class II MHC molecules on resting B-cells. It enhances both secretion and cell surface expression of IgE and IgG1. It also regulates the expression of the low affinity Fc receptor for IgE (CD23) on both lymphocytes and monocytes. Positively regulates IL31RA expression in macrophages. Stimulates autophagy in dendritic cells by interfering with mTORC1 signaling and through the induction of RUFY4. This chain is Interleukin-4 (IL4), found in Capra hircus (Goat).